Here is a 161-residue protein sequence, read N- to C-terminus: MFSNHADMMLTQIAIGLCFTLLYFVVFRTLILQFNMCTPGREDAEVKLYSKAEYKASRGQTTAAEPKKELDQAAGILQALGGVGNISSINNCATRLRIALHDMSQTLDDEVFKKLGAHGVFRSGDAIQVIIGLHVSQLREQLDSLINSHQSAENVAITEAV.

Residues 10-32 (LTQIAIGLCFTLLYFVVFRTLIL) traverse the membrane as a helical segment. One can recognise a PTS EIIB type-1 domain in the interval 70-152 (LDQAAGILQA…DSLINSHQSA (83 aa)). Catalysis depends on Cys92, which acts as the Phosphocysteine intermediate.

It localises to the cell inner membrane. The phosphoenolpyruvate-dependent sugar phosphotransferase system (sugar PTS), a major carbohydrate active -transport system, catalyzes the phosphorylation of incoming sugar substrates concomitantly with their translocation across the cell membrane. This operon may be cryptic in wild-type K12 strains. This Escherichia coli (strain K12) protein is Phosphotransferase enzyme IIB component GlvB.